Here is a 95-residue protein sequence, read N- to C-terminus: Aspartyl/glutamyl-tRNA(Asn/Gln) amidotransferase subunit C (95 aa).

Belongs to the GatC family. As to quaternary structure, heterotrimer of A, B and C subunits.

The enzyme catalyses L-glutamyl-tRNA(Gln) + L-glutamine + ATP + H2O = L-glutaminyl-tRNA(Gln) + L-glutamate + ADP + phosphate + H(+). It carries out the reaction L-aspartyl-tRNA(Asn) + L-glutamine + ATP + H2O = L-asparaginyl-tRNA(Asn) + L-glutamate + ADP + phosphate + 2 H(+). Functionally, allows the formation of correctly charged Asn-tRNA(Asn) or Gln-tRNA(Gln) through the transamidation of misacylated Asp-tRNA(Asn) or Glu-tRNA(Gln) in organisms which lack either or both of asparaginyl-tRNA or glutaminyl-tRNA synthetases. The reaction takes place in the presence of glutamine and ATP through an activated phospho-Asp-tRNA(Asn) or phospho-Glu-tRNA(Gln). In Rhodospirillum rubrum (strain ATCC 11170 / ATH 1.1.1 / DSM 467 / LMG 4362 / NCIMB 8255 / S1), this protein is Aspartyl/glutamyl-tRNA(Asn/Gln) amidotransferase subunit C.